The sequence spans 787 residues: MANFLKSWVESDKREVGRMGKIADKVQSYEDEYSNLSDEALQAKTPEFKTRLANGETLDDILPEAFAVAREGAKRVLGLFPFRVQIIGGITLHEGNIAEMKTGEGKTLTATMPVYLNALAGQGVHVVTVNEYLSSRDATEMGELYNWLGLSVGLNLNAKTPEEKRDAYNSDITYSTNSELGFDYLRDNMVVYKEEMVQRPLNFAIVDEVDSILIDEARTPLIISGQAEKSTALYIRADRFVKTLKEDADYKIDWPTKTISLTEAGIGKAEANFGLDNLYDIENTALTHHLDESLRANFIMLKDIDYVVQDGEVLIVDQFTGRVMDGRRYSDGLHQAIEAKEGVEIQDETKTMANITYQNYFRMYNKLSGMTGTAKTEEEEFREIYNMEVISIPTNRPIARNDKSDVLYPTLESKFHAVVKDIKSRYEKGQPTLVGTVAVESSELLSRLLDENNVPHAVLNAKNHFKEAEIIMNAGQRGAVTIATNMAGRGTDIKLGPGVTDLGGLAVIGTERHESRRIDNQLRGRAGRQGDPGETQFYMSLEDDLMKRFGSERIKAFLDRMKISDDDAVIQSKMITRQVEAAQKRVEGNNYDTRKQTLQYDDVMREQREVIYKQRMQVIMAEDNLKEVIMPMISRTVKRIVQLHTQGDTADWNLEAIHDFATTSMVSEEQLTLEKLQGKSAEEIEALLMTFAEKNYATKQKQLSDENQMLEFEKVVILRVVDERWTDHIDAMDQLRNSIGLRGYGQMNPLVEYQEEGYRMFEEMISDIDYDTTRLFMKAEIRQNIRR.

ATP-binding positions include Q85, 103 to 107 (GEGKT), and D492.

The protein belongs to the SecA family. As to quaternary structure, monomer and homodimer. Part of the essential Sec protein translocation apparatus which comprises SecA, SecYEG and auxiliary proteins SecDF. Other proteins may also be involved.

The protein localises to the cell membrane. It is found in the cytoplasm. It carries out the reaction ATP + H2O + cellular proteinSide 1 = ADP + phosphate + cellular proteinSide 2.. Part of the Sec protein translocase complex. Interacts with the SecYEG preprotein conducting channel. Has a central role in coupling the hydrolysis of ATP to the transfer of proteins into and across the cell membrane, serving as an ATP-driven molecular motor driving the stepwise translocation of polypeptide chains across the membrane. The sequence is that of Protein translocase subunit SecA from Latilactobacillus sakei subsp. sakei (strain 23K) (Lactobacillus sakei subsp. sakei).